We begin with the raw amino-acid sequence, 186 residues long: Peptidyl-tRNA hydrolase (186 aa).

Tyr14 contacts tRNA. The active-site Proton acceptor is the His19. The tRNA site is built by Tyr61, Asn63, and Asn107.

The protein belongs to the PTH family. As to quaternary structure, monomer.

Its subcellular location is the cytoplasm. It catalyses the reaction an N-acyl-L-alpha-aminoacyl-tRNA + H2O = an N-acyl-L-amino acid + a tRNA + H(+). Its function is as follows. Hydrolyzes ribosome-free peptidyl-tRNAs (with 1 or more amino acids incorporated), which drop off the ribosome during protein synthesis, or as a result of ribosome stalling. Catalyzes the release of premature peptidyl moieties from peptidyl-tRNA molecules trapped in stalled 50S ribosomal subunits, and thus maintains levels of free tRNAs and 50S ribosomes. The chain is Peptidyl-tRNA hydrolase from Helicobacter pylori (strain J99 / ATCC 700824) (Campylobacter pylori J99).